Reading from the N-terminus, the 128-residue chain is Fluoride-specific ion channel FluC (128 aa).

4 helical membrane passes run 2–22, 35–55, 67–87, and 96–116; these read FYSI…RWCL, LGTL…AVVF, LFVI…SVEV, and FGWA…LTAL. The Na(+) site is built by G75 and T78.

This sequence belongs to the fluoride channel Fluc/FEX (TC 1.A.43) family.

The protein resides in the cell inner membrane. It catalyses the reaction fluoride(in) = fluoride(out). Its activity is regulated as follows. Na(+) is not transported, but it plays an essential structural role and its presence is essential for fluoride channel function. Functionally, fluoride-specific ion channel. Important for reducing fluoride concentration in the cell, thus reducing its toxicity. The polypeptide is Fluoride-specific ion channel FluC (Burkholderia cenocepacia (strain ATCC BAA-245 / DSM 16553 / LMG 16656 / NCTC 13227 / J2315 / CF5610) (Burkholderia cepacia (strain J2315))).